Here is a 722-residue protein sequence, read N- to C-terminus: MEKNGNNRKLRVCVATCNRADYSKLAPIMFGIKTEPAFFELDVVVLGSHLIDDYGNTYRMIEQDDFDINTRLHTIVRGEDEAAMVESVGLALVKLPDVLNRLKPDIMIVHGDRFDALALATSAALMNIRILHIEGGEVSGTIDDSIRHAITKLAHYHVCCTRSAEQHLISMCEDHDRILLAGCPSYDKLLSAKNKDYMSIIRMWLGDDVKCKDYIVALQHPVTTDIKHSIKMFELTLDALISFNKRTLVLFPNIDAGSKEMVRVMRKKGIEHHPNFRAVKHVPFDQFIQLVAHAGCMIGNSSCGVREVGAFGTPVINLGTRQIGRETGENVLHVRDADTQDKILQALHLQFGKQYPCSKIYGDGNAVPRILKFLKSIDLQEPLQKKFCFPPVKENISQDIDHILETLSALAVDLGGTNLRVAIVSMKGEIVKKYTQFNPKTYEERISLILQMCVEAAAEAVKLNCRILGVGISTGGRVNPQEGVVLHSTKLIQEWNSVDLRTPLSDTLHLPVWVDNDGNCAAMAERKFGQGKGQENFVTLITGTGIGGGIIHQHELIHGSSFCAAELGHLVVSLDGPDCSCGSHGCIEAYASGMALQREAKKLHDEDLLLVEGMSVPKDEAVGALHLIQAAKLGNVKAQSILRTAGTALGLGVVNILHTMNPSLVILSGVLASHYIHIVRDVIRQQALSSVQDVDVVVSDLVDPALLGAASMVLDYTTRRIH.

The UDP site is built by Arg19, Ser23, Arg113, His220, and Asn253. Residues Lys259, Glu271, Lys280, and His281 each coordinate CMP-N-acetyl-beta-neuraminate. Residues Val282, Ser301, Ser302, Glu307, and Arg321 each contribute to the UDP site. The interval 406–722 (TLSALAVDLG…VLDYTTRRIH (317 aa)) is N-acetylmannosamine kinase. Residue Asp413 participates in Mg(2+) binding. An an N-acyl-D-mannosamine 6-phosphate-binding site is contributed by Gly416. ADP contacts are provided by Thr417, Asn418, and Arg420. Gly476, Arg477, Thr489, Asn516, Asp517, and Gly545 together coordinate an N-acyl-D-mannosamine 6-phosphate. Gly476, Arg477, Thr489, Asn516, and Asp517 together coordinate an N-acyl-D-mannosamine. Asp517 is an active-site residue. The an N-acyl-D-mannosamine site is built by Glu566 and His569. An N-acyl-D-mannosamine 6-phosphate is bound at residue His569. Zn(2+)-binding residues include His569, Cys579, Cys581, and Cys586. Glu588 is a binding site for an N-acyl-D-mannosamine 6-phosphate. Residue Glu588 coordinates an N-acyl-D-mannosamine.

It in the N-terminal section; belongs to the UDP-N-acetylglucosamine 2-epimerase family. In the C-terminal section; belongs to the ROK (NagC/XylR) family. As to quaternary structure, homodimer. Homotetramer. Homohexamer. The hexameric form exhibits both enzyme activities, whereas the dimeric form only catalyzes the phosphorylation of N-acyl-D-mannosamine. Phosphorylated. Phosphorylation by PKC activates the UDP-N-acetylglucosamine 2-epimerase activity. In terms of tissue distribution, widely expressed. Highest expression is observed in liver.

Its subcellular location is the cytoplasm. The protein localises to the cytosol. It carries out the reaction UDP-N-acetyl-alpha-D-glucosamine + H2O = aldehydo-N-acetyl-D-mannosamine + UDP + H(+). The enzyme catalyses an N-acyl-D-mannosamine + ATP = an N-acyl-D-mannosamine 6-phosphate + ADP + H(+). The protein operates within amino-sugar metabolism; N-acetylneuraminate biosynthesis. The UDP-N-acetylglucosamine 2-epimerase activity, in contrast to the N-acetylmannosamine kinase activity, exhibits allosteric regulation by cytidine monophosphate-N-acetylneuraminic acid (CMP-Neu5Ac), the end product of neuraminic acid biosynthesis. Moreover, the activity is contingent upon the oligomeric state of the enzyme. The monomeric form is inactive, while the dimeric form selectively catalyzes the phosphorylation of N-acetylmannosamine. The hexameric form, on the other hand, demonstrates full proficiency in both enzyme activities. Furthermore, the UDP-N-acetylglucosamine 2-epimerase activity is increased by PKC-mediated phosphorylation. Functionally, bifunctional enzyme that possesses both UDP-N-acetylglucosamine 2-epimerase and N-acetylmannosamine kinase activities, and serves as the initiator of the biosynthetic pathway leading to the production of N-acetylneuraminic acid (NeuAc), a critical precursor in the synthesis of sialic acids. By catalyzing this pivotal and rate-limiting step in sialic acid biosynthesis, this enzyme assumes a pivotal role in governing the regulation of cell surface sialylation. Sialic acids represent a category of negatively charged sugars that reside on the surface of cells as terminal components of glycoconjugates and mediate important functions in various cellular processes, including cell adhesion, signal transduction, and cellular recognition. The protein is Bifunctional UDP-N-acetylglucosamine 2-epimerase/N-acetylmannosamine kinase of Rattus norvegicus (Rat).